We begin with the raw amino-acid sequence, 64 residues long: Alpha-like toxin BmK M2 (64 aa).

The LCN-type CS-alpha/beta domain occupies 2–64 (RDAYIAKPHN…VPIRVPGKCH (63 aa)). 4 disulfide bridges follow: Cys-12–Cys-63, Cys-16–Cys-36, Cys-22–Cys-46, and Cys-26–Cys-48.

This sequence belongs to the long (4 C-C) scorpion toxin superfamily. Sodium channel inhibitor family. Alpha subfamily. As to expression, expressed by the venom gland.

The protein localises to the secreted. Its function is as follows. Alpha toxins bind voltage-independently at site-3 of sodium channels (Nav) and inhibit the inactivation of the activated channels, thereby blocking neuronal transmission. This toxin is active against both mammals and insects, and is classified as an alpha-like toxin. The chain is Alpha-like toxin BmK M2 from Olivierus martensii (Manchurian scorpion).